Consider the following 595-residue polypeptide: Elongation factor 4 (595 aa).

A tr-type G domain is found at K2–A183. Residues D14 to T19 and N130 to D133 contribute to the GTP site.

The protein belongs to the TRAFAC class translation factor GTPase superfamily. Classic translation factor GTPase family. LepA subfamily.

The protein localises to the cell inner membrane. It catalyses the reaction GTP + H2O = GDP + phosphate + H(+). In terms of biological role, required for accurate and efficient protein synthesis under certain stress conditions. May act as a fidelity factor of the translation reaction, by catalyzing a one-codon backward translocation of tRNAs on improperly translocated ribosomes. Back-translocation proceeds from a post-translocation (POST) complex to a pre-translocation (PRE) complex, thus giving elongation factor G a second chance to translocate the tRNAs correctly. Binds to ribosomes in a GTP-dependent manner. In Porphyromonas gingivalis (strain ATCC BAA-308 / W83), this protein is Elongation factor 4.